The following is a 67-amino-acid chain: UPF0253 protein VV2574 (67 aa).

It belongs to the UPF0253 family.

The sequence is that of UPF0253 protein VV2574 from Vibrio vulnificus (strain YJ016).